Reading from the N-terminus, the 397-residue chain is Elongation factor Tu 1 (397 aa).

The tr-type G domain maps to 10–207; sequence KPHVNVGTIG…TLDSYIPEPV (198 aa). Residues 19 to 26 are G1; it reads GHVDHGKT. 19–26 contacts GTP; that stretch reads GHVDHGKT. Threonine 26 contacts Mg(2+). The interval 60-64 is G2; the sequence is GITIN. Residues 81-84 are G3; the sequence is DCPG. Residues 81-85 and 136-139 contribute to the GTP site; these read DCPGH and NKAD. The segment at 136–139 is G4; that stretch reads NKAD. The tract at residues 174 to 176 is G5; that stretch reads SAL.

This sequence belongs to the TRAFAC class translation factor GTPase superfamily. Classic translation factor GTPase family. EF-Tu/EF-1A subfamily. Monomer.

It is found in the cytoplasm. The catalysed reaction is GTP + H2O = GDP + phosphate + H(+). In terms of biological role, GTP hydrolase that promotes the GTP-dependent binding of aminoacyl-tRNA to the A-site of ribosomes during protein biosynthesis. The chain is Elongation factor Tu 1 from Stutzerimonas stutzeri (strain A1501) (Pseudomonas stutzeri).